The sequence spans 64 residues: Large ribosomal subunit protein bL35 (64 aa).

The disordered stretch occupies residues 1 to 20 (MKQKTHKGTAKRIKVTGSGK).

The protein belongs to the bacterial ribosomal protein bL35 family.

This is Large ribosomal subunit protein bL35 from Corynebacterium urealyticum (strain ATCC 43042 / DSM 7109).